Here is a 548-residue protein sequence, read N- to C-terminus: ATP synthase subunit alpha (548 aa).

172–179 serves as a coordination point for ATP; it reads GDRKTGKT. The segment at 526–548 is disordered; that stretch reads AEAMDEADVEKESVKVRKPAPKK.

It belongs to the ATPase alpha/beta chains family. In terms of assembly, F-type ATPases have 2 components, CF(1) - the catalytic core - and CF(0) - the membrane proton channel. CF(1) has five subunits: alpha(3), beta(3), gamma(1), delta(1), epsilon(1). CF(0) has three main subunits: a(1), b(2) and c(9-12). The alpha and beta chains form an alternating ring which encloses part of the gamma chain. CF(1) is attached to CF(0) by a central stalk formed by the gamma and epsilon chains, while a peripheral stalk is formed by the delta and b chains.

It localises to the cell membrane. It carries out the reaction ATP + H2O + 4 H(+)(in) = ADP + phosphate + 5 H(+)(out). Functionally, produces ATP from ADP in the presence of a proton gradient across the membrane. The alpha chain is a regulatory subunit. The polypeptide is ATP synthase subunit alpha (Mycolicibacterium vanbaalenii (strain DSM 7251 / JCM 13017 / BCRC 16820 / KCTC 9966 / NRRL B-24157 / PYR-1) (Mycobacterium vanbaalenii)).